Here is a 317-residue protein sequence, read N- to C-terminus: Alkylsulfatase (317 aa).

Histidine 78 lines the substrate pocket. 2 residues coordinate Fe cation: histidine 105 and aspartate 107. Valine 108 is a substrate binding site. Threonine 132 lines the 2-oxoglutarate pocket. Histidine 261 contributes to the Fe cation binding site. Positions 272 and 276 each coordinate 2-oxoglutarate.

The protein belongs to the TfdA dioxygenase family. As to quaternary structure, homotetramer. It depends on Fe(2+) as a cofactor.

Its function is as follows. Alpha-ketoglutarate-dependent dioxygenase that in vitro catalyzes the oxygenolytic release of sulfite from hexylsulfate. The sequence is that of Alkylsulfatase from Acinetobacter baylyi (strain ATCC 33305 / BD413 / ADP1).